The chain runs to 148 residues: uncharacterized protein (148 aa).

An N-terminal signal peptide occupies residues 1–23 (MKALVAVSAVAVVALLGVSSAQA). Residues 22–45 (QADPEADPGAGEANYGGPPSSPRL) form a disordered region.

It to M.leprae ML2452.

This is an uncharacterized protein from Mycobacterium bovis (strain ATCC BAA-935 / AF2122/97).